We begin with the raw amino-acid sequence, 251 residues long: Hydroxyacylglutathione hydrolase (251 aa).

Zn(2+)-binding residues include His-53, His-55, Asp-57, His-58, His-110, Asp-127, and His-165.

Belongs to the metallo-beta-lactamase superfamily. Glyoxalase II family. In terms of assembly, monomer. The cofactor is Zn(2+).

The enzyme catalyses an S-(2-hydroxyacyl)glutathione + H2O = a 2-hydroxy carboxylate + glutathione + H(+). The protein operates within secondary metabolite metabolism; methylglyoxal degradation; (R)-lactate from methylglyoxal: step 2/2. In terms of biological role, thiolesterase that catalyzes the hydrolysis of S-D-lactoyl-glutathione to form glutathione and D-lactic acid. The polypeptide is Hydroxyacylglutathione hydrolase (Escherichia coli (strain SE11)).